Here is a 476-residue protein sequence, read N- to C-terminus: 1-aminocyclopropane-1-carboxylate synthase 4 (476 aa).

Residue lysine 282 is modified to N6-(pyridoxal phosphate)lysine.

The protein belongs to the class-I pyridoxal-phosphate-dependent aminotransferase family. In terms of assembly, homodimer. It depends on pyridoxal 5'-phosphate as a cofactor.

It carries out the reaction S-adenosyl-L-methionine = 1-aminocyclopropane-1-carboxylate + S-methyl-5'-thioadenosine + H(+). Its pathway is alkene biosynthesis; ethylene biosynthesis via S-adenosyl-L-methionine; ethylene from S-adenosyl-L-methionine: step 1/2. Catalyzes the formation of 1-aminocyclopropane-1-carboxylate, a direct precursor of ethylene in higher plants. The chain is 1-aminocyclopropane-1-carboxylate synthase 4 (ACS4) from Solanum lycopersicum (Tomato).